We begin with the raw amino-acid sequence, 502 residues long: Putative diacyglycerol O-acyltransferase MT1809 (502 aa).

H174 (proton acceptor) is an active-site residue.

It belongs to the long-chain O-acyltransferase family.

It catalyses the reaction an acyl-CoA + a 1,2-diacyl-sn-glycerol = a triacyl-sn-glycerol + CoA. Its pathway is glycerolipid metabolism; triacylglycerol biosynthesis. This Mycobacterium tuberculosis (strain CDC 1551 / Oshkosh) protein is Putative diacyglycerol O-acyltransferase MT1809.